Reading from the N-terminus, the 322-residue chain is 4-hydroxy-3-methylbut-2-enyl diphosphate reductase (322 aa).

[4Fe-4S] cluster is bound at residue Cys12. (2E)-4-hydroxy-3-methylbut-2-enyl diphosphate is bound by residues His43 and His81. His43 and His81 together coordinate dimethylallyl diphosphate. His43 and His81 together coordinate isopentenyl diphosphate. Cys103 contributes to the [4Fe-4S] cluster binding site. Residue His131 participates in (2E)-4-hydroxy-3-methylbut-2-enyl diphosphate binding. Residue His131 coordinates dimethylallyl diphosphate. His131 provides a ligand contact to isopentenyl diphosphate. The Proton donor role is filled by Glu133. Thr172 is a (2E)-4-hydroxy-3-methylbut-2-enyl diphosphate binding site. A [4Fe-4S] cluster-binding site is contributed by Cys200. Residues Ser228, Asn230, and Ser273 each coordinate (2E)-4-hydroxy-3-methylbut-2-enyl diphosphate. Residues Ser228, Asn230, and Ser273 each coordinate dimethylallyl diphosphate. 3 residues coordinate isopentenyl diphosphate: Ser228, Asn230, and Ser273.

Belongs to the IspH family. The cofactor is [4Fe-4S] cluster.

The enzyme catalyses isopentenyl diphosphate + 2 oxidized [2Fe-2S]-[ferredoxin] + H2O = (2E)-4-hydroxy-3-methylbut-2-enyl diphosphate + 2 reduced [2Fe-2S]-[ferredoxin] + 2 H(+). The catalysed reaction is dimethylallyl diphosphate + 2 oxidized [2Fe-2S]-[ferredoxin] + H2O = (2E)-4-hydroxy-3-methylbut-2-enyl diphosphate + 2 reduced [2Fe-2S]-[ferredoxin] + 2 H(+). It participates in isoprenoid biosynthesis; dimethylallyl diphosphate biosynthesis; dimethylallyl diphosphate from (2E)-4-hydroxy-3-methylbutenyl diphosphate: step 1/1. Its pathway is isoprenoid biosynthesis; isopentenyl diphosphate biosynthesis via DXP pathway; isopentenyl diphosphate from 1-deoxy-D-xylulose 5-phosphate: step 6/6. In terms of biological role, catalyzes the conversion of 1-hydroxy-2-methyl-2-(E)-butenyl 4-diphosphate (HMBPP) into a mixture of isopentenyl diphosphate (IPP) and dimethylallyl diphosphate (DMAPP). Acts in the terminal step of the DOXP/MEP pathway for isoprenoid precursor biosynthesis. This is 4-hydroxy-3-methylbut-2-enyl diphosphate reductase from Macrococcus caseolyticus (strain JCSC5402) (Macrococcoides caseolyticum).